The primary structure comprises 293 residues: NAD-dependent protein deacetylase (293 aa).

In terms of domain architecture, Deacetylase sirtuin-type spans 1-284 (MTVAITQTGP…QPPDPLHTAT (284 aa)). NAD(+) is bound by residues 27 to 47 (GAGC…GGWK) and 105 to 108 (QNVD). The Proton acceptor role is filled by histidine 123. The Zn(2+) site is built by cysteine 131, cysteine 134, cysteine 182, and cysteine 185. NAD(+) is bound by residues 222–224 (GSS), 248–250 (NFG), and cysteine 266.

This sequence belongs to the sirtuin family. Class II subfamily. Requires Zn(2+) as cofactor.

It localises to the cytoplasm. The enzyme catalyses N(6)-acetyl-L-lysyl-[protein] + NAD(+) + H2O = 2''-O-acetyl-ADP-D-ribose + nicotinamide + L-lysyl-[protein]. NAD-dependent protein deacetylase which modulates the activities of several enzymes which are inactive in their acetylated form. This chain is NAD-dependent protein deacetylase, found in Xanthomonas campestris pv. campestris (strain 8004).